We begin with the raw amino-acid sequence, 152 residues long: Deoxyuridine 5'-triphosphate nucleotidohydrolase (152 aa).

Residues 71 to 73, asparagine 84, 88 to 90, and methionine 98 contribute to the substrate site; these read RSG and LID.

The protein belongs to the dUTPase family. In terms of assembly, homotrimer. Mg(2+) serves as cofactor.

The catalysed reaction is dUTP + H2O = dUMP + diphosphate + H(+). Its pathway is pyrimidine metabolism; dUMP biosynthesis; dUMP from dCTP (dUTP route): step 2/2. This enzyme is involved in nucleotide metabolism: it produces dUMP, the immediate precursor of thymidine nucleotides and it decreases the intracellular concentration of dUTP so that uracil cannot be incorporated into DNA. This Escherichia coli O157:H7 protein is Deoxyuridine 5'-triphosphate nucleotidohydrolase.